The primary structure comprises 364 residues: Histidinol-phosphate aminotransferase (364 aa).

The residue at position 226 (lysine 226) is an N6-(pyridoxal phosphate)lysine.

The protein belongs to the class-II pyridoxal-phosphate-dependent aminotransferase family. Histidinol-phosphate aminotransferase subfamily. In terms of assembly, homodimer. The cofactor is pyridoxal 5'-phosphate.

It catalyses the reaction L-histidinol phosphate + 2-oxoglutarate = 3-(imidazol-4-yl)-2-oxopropyl phosphate + L-glutamate. It participates in amino-acid biosynthesis; L-histidine biosynthesis; L-histidine from 5-phospho-alpha-D-ribose 1-diphosphate: step 7/9. In Campylobacter jejuni (strain RM1221), this protein is Histidinol-phosphate aminotransferase.